The chain runs to 416 residues: Leu/Ile/Val-binding protein homolog 4 (416 aa).

An N-terminal signal peptide occupies residues 1 to 26 (MSLKVFLQAGVACAALSLAGAAGASA).

Belongs to the leucine-binding protein family.

Functionally, component of an amino-acid transport system. The polypeptide is Leu/Ile/Val-binding protein homolog 4 (Brucella melitensis biotype 1 (strain ATCC 23456 / CCUG 17765 / NCTC 10094 / 16M)).